The primary structure comprises 290 residues: Carbonic anhydrase-related protein (290 aa).

Positions 1-26 are disordered; it reads MADLSFIEDTVAFPEKEEDEEEEEEG. Ser-5 is subject to Phosphoserine. The segment covering 16–26 has biased composition (acidic residues); it reads KEEDEEEEEEG. In terms of domain architecture, Alpha-carbonic anhydrase spans 27 to 289; sequence VEWGYEEGVE…LSDRVIRAAF (263 aa). The active-site Proton donor/acceptor is His-87. Residues His-118 and His-141 each coordinate Zn(2+).

The protein belongs to the alpha-carbonic anhydrase family.

Its function is as follows. Does not have a carbonic anhydrase catalytic activity. The chain is Carbonic anhydrase-related protein (CA8) from Homo sapiens (Human).